We begin with the raw amino-acid sequence, 546 residues long: CTP synthase (546 aa).

An amidoligase domain region spans residues 1–265 (MTKYIFVTGG…DDIIAEQLQL (265 aa)). S13 provides a ligand contact to CTP. S13 serves as a coordination point for UTP. ATP-binding positions include 14–19 (SLGKGI) and D71. Mg(2+) is bound by residues D71 and E139. Residues 146–148 (DIE), 186–191 (KTKPTQ), and K222 contribute to the CTP site. UTP contacts are provided by residues 186–191 (KTKPTQ) and K222. The Glutamine amidotransferase type-1 domain maps to 290–542 (KIAMVGKYVD…VKAALAHQAD (253 aa)). G351 provides a ligand contact to L-glutamine. C378 functions as the Nucleophile; for glutamine hydrolysis in the catalytic mechanism. L-glutamine is bound by residues 379 to 382 (LGMQ), E402, and R469. Active-site residues include H515 and E517.

Belongs to the CTP synthase family. Homotetramer.

The catalysed reaction is UTP + L-glutamine + ATP + H2O = CTP + L-glutamate + ADP + phosphate + 2 H(+). It carries out the reaction L-glutamine + H2O = L-glutamate + NH4(+). The enzyme catalyses UTP + NH4(+) + ATP = CTP + ADP + phosphate + 2 H(+). It functions in the pathway pyrimidine metabolism; CTP biosynthesis via de novo pathway; CTP from UDP: step 2/2. With respect to regulation, allosterically activated by GTP, when glutamine is the substrate; GTP has no effect on the reaction when ammonia is the substrate. The allosteric effector GTP functions by stabilizing the protein conformation that binds the tetrahedral intermediate(s) formed during glutamine hydrolysis. Inhibited by the product CTP, via allosteric rather than competitive inhibition. Its function is as follows. Catalyzes the ATP-dependent amination of UTP to CTP with either L-glutamine or ammonia as the source of nitrogen. Regulates intracellular CTP levels through interactions with the four ribonucleotide triphosphates. This chain is CTP synthase, found in Chromobacterium violaceum (strain ATCC 12472 / DSM 30191 / JCM 1249 / CCUG 213 / NBRC 12614 / NCIMB 9131 / NCTC 9757 / MK).